The chain runs to 504 residues: MKKYVMALDQGTTSSRAILFDYEGKIVATSQKEFTQIYPKAGWVEHDPMEIWGTQSGVAREVLERMAISPQDIAAIGITNQRETTIVWDKNTGKPVYNAIVWQCRRTAAICDELKTQGMADYIRENTGLVLDAYFSGTKIKWILDHVEGAKEKAEKGELLFGTVDSWLIWNLTRGKVHVTDYSNASRTMLYNIKQLKWDDKILKALEIPKSMLPEVKESSAIYGYTDHQTFGGADIPIAGAAGDQQAALFGQGCFKEGMGKNTYGTGCFMLMNTGDQFVQSKNGLLTTLAWGIDGKVEYALEGSIFVAGASVQWLRDELKIIRDAEDTEYLAKKVPNSNGVYVVPAFTGMGAPYWDMYARGAIVGLTRGAKAEHIIRATLESIAYQTRDVLEAMEQDSGIQLKSLKVDGGAAMNNFLMQFQADILSVPVDRPKITETTALGAAYLAGLAVGFWKDKNEIESKWSVDTVFEPGMDHEEKERLYKGWKRAVNRALKWEEENELDVK.

Threonine 12 is an ADP binding site. Positions 12, 13, and 14 each coordinate ATP. Threonine 12 is a sn-glycerol 3-phosphate binding site. ADP is bound at residue arginine 16. Sn-glycerol 3-phosphate is bound by residues arginine 82, glutamate 83, tyrosine 134, and aspartate 244. Positions 82, 83, 134, 244, and 245 each coordinate glycerol. ADP contacts are provided by threonine 266 and glycine 309. ATP contacts are provided by threonine 266, glycine 309, glutamine 313, and glycine 410. The ADP site is built by glycine 410 and asparagine 414.

This sequence belongs to the FGGY kinase family. In terms of assembly, homotetramer and homodimer (in equilibrium).

The enzyme catalyses glycerol + ATP = sn-glycerol 3-phosphate + ADP + H(+). Its pathway is polyol metabolism; glycerol degradation via glycerol kinase pathway; sn-glycerol 3-phosphate from glycerol: step 1/1. With respect to regulation, activated by phosphorylation and inhibited by fructose 1,6-bisphosphate (FBP). In terms of biological role, key enzyme in the regulation of glycerol uptake and metabolism. Catalyzes the phosphorylation of glycerol to yield sn-glycerol 3-phosphate. In Alkaliphilus oremlandii (strain OhILAs) (Clostridium oremlandii (strain OhILAs)), this protein is Glycerol kinase.